Reading from the N-terminus, the 48-residue chain is Phospholipase A2 superbin d (48 aa).

Ca(2+) contacts are provided by tyrosine 28, glycine 30, and glycine 32. Cysteine 29 and cysteine 45 are joined by a disulfide. Histidine 48 is an active-site residue.

Ca(2+) serves as cofactor. In terms of tissue distribution, expressed by the venom gland.

Its subcellular location is the secreted. It carries out the reaction a 1,2-diacyl-sn-glycero-3-phosphocholine + H2O = a 1-acyl-sn-glycero-3-phosphocholine + a fatty acid + H(+). Its function is as follows. Snake venom phospholipase A2 (PLA2) that inhibits collagen-induced platelet aggregation. In terms of inhibition of platelet aggregation, superbin d is less potent as superbin a, b, and c. PLA2 catalyzes the calcium-dependent hydrolysis of the 2-acyl groups in 3-sn-phosphoglycerides. This is Phospholipase A2 superbin d from Austrelaps superbus (Lowland copperhead snake).